Consider the following 180-residue polypeptide: MFDIGWSELLVIGVVALIAIGPKELPGVLRMVGQWMGKARRMASEFQGQFQEAMREAEMADLKKSFDEVKEAASGFSPSGMMSSLQRDVDKALDIEGVDKPVESQPAASAAPETSATVEAPATPTTPEPPRVETFVEADAHQAVGEPLAIVREIKPEPQPQSLDGAAPAEAERLKDAKAS.

The chain crosses the membrane as a helical span at residues 1–21 (MFDIGWSELLVIGVVALIAIG). Positions 95-180 (IEGVDKPVES…AERLKDAKAS (86 aa)) are disordered. Residues 103-123 (ESQPAASAAPETSATVEAPAT) are compositionally biased toward low complexity. A compositionally biased stretch (basic and acidic residues) spans 170–180 (EAERLKDAKAS).

This sequence belongs to the TatB family. The Tat system comprises two distinct complexes: a TatABC complex, containing multiple copies of TatA, TatB and TatC subunits, and a separate TatA complex, containing only TatA subunits. Substrates initially bind to the TatABC complex, which probably triggers association of the separate TatA complex to form the active translocon.

It localises to the cell inner membrane. In terms of biological role, part of the twin-arginine translocation (Tat) system that transports large folded proteins containing a characteristic twin-arginine motif in their signal peptide across membranes. Together with TatC, TatB is part of a receptor directly interacting with Tat signal peptides. TatB may form an oligomeric binding site that transiently accommodates folded Tat precursor proteins before their translocation. The protein is Sec-independent protein translocase protein TatB of Bradyrhizobium sp. (strain BTAi1 / ATCC BAA-1182).